A 114-amino-acid polypeptide reads, in one-letter code: Transcription factor S1 (114 aa).

The N-ZR stretch occupies residues 1 to 43 (MIVVKFCPKCNSMMVPKKSNGKNVYRCTKCGYEKEVPETTIVV). The Zn(2+) site is built by Cys7, Cys10, Cys27, Cys30, Cys75, and Cys78. The tract at residues 63 to 114 (MPSGAQKIKGVLCPSCKNDEAYFWILQTRRADEPPTRFYKCTKCGKVWREYE) is C-ZR. The TFIIS-type zinc-finger motif lies at 71-111 (KGVLCPSCKNDEAYFWILQTRRADEPPTRFYKCTKCGKVWR). Residues Asp94 and Glu95 contribute to the active site. Residues Cys103 and Cys106 each contribute to the Zn(2+) site.

The protein belongs to the archaeal RpoM/eukaryotic RPA12/RPB9/RPC11 RNA polymerase family. In terms of assembly, interacts with RNA polymerase; probably competes with TFS4 for the same binding site. The cofactor is Zn(2+).

In terms of biological role, induces RNA cleavage activity in the RNA polymerase. Induces rapid cleavage of a stalled transcription elongation complex with a 2-nucleotide reduction at the 3' end of the nascent RNA. Truncated RNA is able to resume elongation. During transcription elongation it enhances processivity. Involved in transcriptional proofreading and fidelity. Misincorporation of nucleotides during elongation of transcription leads to arrested elongation complexes which are rescued by TFS-promoted removal of a dinucleotide from the 3'-end. TFS1 is able to induce a cleavage resynthesis cycle in stalled elongation complexes (resulting from the next missing nucleotide or a reduced incorporation rate of a wrong nucleotide) preventing misincorporation and enabling proofreading in a post-incorporation manner. Pausing of elongation complexes is the main determinant of TFS-induced RNA cleavage. The chain is Transcription factor S1 from Saccharolobus solfataricus (strain ATCC 35092 / DSM 1617 / JCM 11322 / P2) (Sulfolobus solfataricus).